The primary structure comprises 520 residues: GMP synthase [glutamine-hydrolyzing] (520 aa).

The region spanning lysine 13–aspartate 205 is the Glutamine amidotransferase type-1 domain. The active-site Nucleophile is the cysteine 90. Active-site residues include histidine 179 and glutamate 181. The region spanning tryptophan 206–arginine 395 is the GMPS ATP-PPase domain. Residue serine 233–serine 239 coordinates ATP.

As to quaternary structure, homodimer.

It catalyses the reaction XMP + L-glutamine + ATP + H2O = GMP + L-glutamate + AMP + diphosphate + 2 H(+). Its pathway is purine metabolism; GMP biosynthesis; GMP from XMP (L-Gln route): step 1/1. In terms of biological role, catalyzes the synthesis of GMP from XMP. This Streptococcus pneumoniae serotype 2 (strain D39 / NCTC 7466) protein is GMP synthase [glutamine-hydrolyzing].